We begin with the raw amino-acid sequence, 115 residues long: Large ribosomal subunit protein bL19 (115 aa).

The protein belongs to the bacterial ribosomal protein bL19 family.

This protein is located at the 30S-50S ribosomal subunit interface and may play a role in the structure and function of the aminoacyl-tRNA binding site. The sequence is that of Large ribosomal subunit protein bL19 from Francisella tularensis subsp. tularensis (strain WY96-3418).